The following is a 201-amino-acid chain: Large ribosomal subunit protein eL15B (201 aa).

Positions 161-182 are disordered; sequence SRGLTSIGKKSRGIGKGHRYNN. A compositionally biased stretch (basic residues) spans 169 to 179; the sequence is KKSRGIGKGHR. Phosphoserine is present on Ser-183.

Belongs to the eukaryotic ribosomal protein eL15 family. In terms of assembly, component of the large ribosomal subunit (LSU). Mature yeast ribosomes consist of a small (40S) and a large (60S) subunit. The 40S small subunit contains 1 molecule of ribosomal RNA (18S rRNA) and at least 33 different proteins. The large 60S subunit contains 3 rRNA molecules (25S, 5.8S and 5S rRNA) and at least 46 different proteins.

Its subcellular location is the cytoplasm. It localises to the nucleus. The protein localises to the nucleolus. Functionally, component of the ribosome, a large ribonucleoprotein complex responsible for the synthesis of proteins in the cell. The small ribosomal subunit (SSU) binds messenger RNAs (mRNAs) and translates the encoded message by selecting cognate aminoacyl-transfer RNA (tRNA) molecules. The large subunit (LSU) contains the ribosomal catalytic site termed the peptidyl transferase center (PTC), which catalyzes the formation of peptide bonds, thereby polymerizing the amino acids delivered by tRNAs into a polypeptide chain. The nascent polypeptides leave the ribosome through a tunnel in the LSU and interact with protein factors that function in enzymatic processing, targeting, and the membrane insertion of nascent chains at the exit of the ribosomal tunnel. This Schizosaccharomyces pombe (strain 972 / ATCC 24843) (Fission yeast) protein is Large ribosomal subunit protein eL15B (rpl1502).